Here is a 262-residue protein sequence, read N- to C-terminus: uncharacterized protein (262 aa).

This sequence belongs to the AB hydrolase superfamily. AB hydrolase 2 family.

This is an uncharacterized protein from Mycosarcoma maydis (Corn smut fungus).